The sequence spans 303 residues: GTPase Era (303 aa).

Residues 7 to 176 (KSGFVAIIGR…LDNVVSHLDE (170 aa)) enclose the Era-type G domain. Positions 15-22 (GRPNVGKS) are G1. 15 to 22 (GRPNVGKS) is a GTP binding site. A G2 region spans residues 41-45 (QTTRN). The segment at 62–65 (DTPG) is G3. GTP is bound by residues 62-66 (DTPGV) and 125-128 (NKVD). Residues 125–128 (NKVD) form a G4 region. The interval 155 to 157 (ISA) is G5. A KH type-2 domain is found at 207 to 284 (TRQEVPHSVA…FLETWVKVEP (78 aa)).

The protein belongs to the TRAFAC class TrmE-Era-EngA-EngB-Septin-like GTPase superfamily. Era GTPase family. Monomer.

Its subcellular location is the cytoplasm. The protein localises to the cell membrane. Its function is as follows. An essential GTPase that binds both GDP and GTP, with rapid nucleotide exchange. Plays a role in 16S rRNA processing and 30S ribosomal subunit biogenesis and possibly also in cell cycle regulation and energy metabolism. This chain is GTPase Era, found in Leuconostoc citreum (strain KM20).